Consider the following 195-residue polypeptide: Glycerol-3-phosphate acyltransferase (195 aa).

Transmembrane regions (helical) follow at residues 2–22, 79–99, 111–131, and 146–166; these read INLLVIISAYFIGNFSTSFIV, AALMAGIAVVIGHNWPVLLGF, VALIASPLAAIASISLGVVIL, and TILPFFLFSYGLEYFIFGLVL.

Belongs to the PlsY family. In terms of assembly, probably interacts with PlsX.

The protein resides in the cell membrane. The enzyme catalyses an acyl phosphate + sn-glycerol 3-phosphate = a 1-acyl-sn-glycero-3-phosphate + phosphate. Its pathway is lipid metabolism; phospholipid metabolism. Its function is as follows. Catalyzes the transfer of an acyl group from acyl-phosphate (acyl-PO(4)) to glycerol-3-phosphate (G3P) to form lysophosphatidic acid (LPA). This enzyme utilizes acyl-phosphate as fatty acyl donor, but not acyl-CoA or acyl-ACP. The sequence is that of Glycerol-3-phosphate acyltransferase from Alkaliphilus metalliredigens (strain QYMF).